The following is a 196-amino-acid chain: Adenosylcobinamide-phosphate guanylyltransferase (196 aa).

In terms of assembly, homodimer.

It catalyses the reaction adenosylcob(III)inamide phosphate + GTP + H(+) = adenosylcob(III)inamide-GDP + diphosphate. It participates in cofactor biosynthesis; adenosylcobalamin biosynthesis. In terms of biological role, guanylyltransferase that catalyzes the synthesis of adenosylcobinamide-GDP (AdoCbi-GDP) from adenosylcobinamide-phosphate (AdoCbi-P) and GTP. Is involved in adenosylcobalamin biosynthesis. Binds one GTP per dimer. Cannot use other NTPs or GDP. Does not display AdoCbi kinase activity. Is also able to catalyze the condensation of 2-phospho-L-lactate (LP) with GTP in vitro to form PPi and (2S)-lactyl-2-diphospho-5'-guanosine (LPPG), but is much less efficient than CofC, the presumed enzyme catalyzing this reaction in vivo. This is Adenosylcobinamide-phosphate guanylyltransferase (cobY) from Methanocaldococcus jannaschii (strain ATCC 43067 / DSM 2661 / JAL-1 / JCM 10045 / NBRC 100440) (Methanococcus jannaschii).